We begin with the raw amino-acid sequence, 242 residues long: Venom nerve growth factor 3 (242 aa).

The signal sequence occupies residues 1–18; sequence MSMLCYTLIIAFLIGIWA. The propeptide occupies 19 to 125; it reads APQSEDNVPL…ALNRNIQAKR (107 aa). The segment at 45–69 is disordered; that stretch reads HEGLKTSRNTDQRHPAPKKVDDQEP. The span at 46 to 66 shows a compositional bias: basic and acidic residues; it reads EGLKTSRNTDQRHPAPKKVDD. Intrachain disulfides connect Cys139/Cys203, Cys181/Cys231, and Cys191/Cys233.

This sequence belongs to the NGF-beta family. In terms of assembly, homodimer; non-covalently linked. Expressed by the venom gland.

The protein resides in the secreted. Functionally, nerve growth factor is important for the development and maintenance of the sympathetic and sensory nervous systems. It stimulates division and differentiation of sympathetic and embryonic sensory neurons as well as basal forebrain cholinergic neurons in the brain. Its relevance in the snake venom is not clear. However, it has been shown to inhibit metalloproteinase-dependent proteolysis of platelet glycoprotein Ib alpha, suggesting a metalloproteinase inhibition to prevent metalloprotease autodigestion and/or protection against prey proteases. Binds a lipid between the two protein chains in the homodimer. The lipid-bound form promotes histamine relase from mouse mast cells, contrary to the lipid-free form. This Pseudechis australis (Mulga snake) protein is Venom nerve growth factor 3.